The sequence spans 446 residues: Tubulin alpha chain-like 3 (446 aa).

The MREC motif signature appears at 1-4 (MREC). GTP-binding residues include Q11, E78, S147, G151, T152, T186, N213, and N235. E78 contacts Mg(2+). The active site involves E261.

This sequence belongs to the tubulin family. Dimer of alpha and beta chains. A typical microtubule is a hollow water-filled tube with an outer diameter of 25 nm and an inner diameter of 15 nM. Alpha-beta heterodimers associate head-to-tail to form protofilaments running lengthwise along the microtubule wall with the beta-tubulin subunit facing the microtubule plus end conferring a structural polarity. Microtubules usually have 13 protofilaments but different protofilament numbers can be found in some organisms and specialized cells. Requires Mg(2+) as cofactor. Post-translationally, some glutamate residues at the C-terminus are polyglycylated, resulting in polyglycine chains on the gamma-carboxyl group. Glycylation is mainly limited to tubulin incorporated into axonemes (cilia and flagella) whereas glutamylation is prevalent in neuronal cells, centrioles, axonemes, and the mitotic spindle. Both modifications can coexist on the same protein on adjacent residues, and lowering polyglycylation levels increases polyglutamylation, and reciprocally. Cilia and flagella glycylation is required for their stability and maintenance. Flagella glycylation controls sperm motility. In terms of processing, some glutamate residues at the C-terminus are polyglutamylated, resulting in polyglutamate chains on the gamma-carboxyl group. Polyglutamylation plays a key role in microtubule severing by spastin (SPAST). SPAST preferentially recognizes and acts on microtubules decorated with short polyglutamate tails: severing activity by SPAST increases as the number of glutamates per tubulin rises from one to eight, but decreases beyond this glutamylation threshold. Glutamylation is also involved in cilia motility.

It localises to the cytoplasm. The protein localises to the cytoskeleton. The catalysed reaction is GTP + H2O = GDP + phosphate + H(+). Functionally, tubulin is the major constituent of microtubules, a cylinder consisting of laterally associated linear protofilaments composed of alpha- and beta-tubulin heterodimers. Microtubules grow by the addition of GTP-tubulin dimers to the microtubule end, where a stabilizing cap forms. Below the cap, tubulin dimers are in GDP-bound state, owing to GTPase activity of alpha-tubulin. In Mus musculus (Mouse), this protein is Tubulin alpha chain-like 3 (Tubal3).